Consider the following 324-residue polypeptide: tRNA dimethylallyltransferase (324 aa).

15 to 22 (GPTATGKS) is a binding site for ATP. 17-22 (TATGKS) contacts substrate. The tract at residues 40–43 (DSAQ) is interaction with substrate tRNA.

The protein belongs to the IPP transferase family. As to quaternary structure, monomer. Requires Mg(2+) as cofactor.

It catalyses the reaction adenosine(37) in tRNA + dimethylallyl diphosphate = N(6)-dimethylallyladenosine(37) in tRNA + diphosphate. Functionally, catalyzes the transfer of a dimethylallyl group onto the adenine at position 37 in tRNAs that read codons beginning with uridine, leading to the formation of N6-(dimethylallyl)adenosine (i(6)A). This is tRNA dimethylallyltransferase from Moorella thermoacetica (strain ATCC 39073 / JCM 9320).